Here is a 485-residue protein sequence, read N- to C-terminus: Cobyric acid synthase (485 aa).

The GATase cobBQ-type domain maps to 248–435 (RLKVAVAVPP…LHGLFESPAA (188 aa)). Cys329 functions as the Nucleophile in the catalytic mechanism. The active site involves His427.

Belongs to the CobB/CobQ family. CobQ subfamily.

Its pathway is cofactor biosynthesis; adenosylcobalamin biosynthesis. Its function is as follows. Catalyzes amidations at positions B, D, E, and G on adenosylcobyrinic A,C-diamide. NH(2) groups are provided by glutamine, and one molecule of ATP is hydrogenolyzed for each amidation. The polypeptide is Cobyric acid synthase (Azotobacter vinelandii (strain DJ / ATCC BAA-1303)).